The following is a 251-amino-acid chain: Probable transcriptional regulatory protein SYNPCC7002_A0851 (251 aa).

Residues 20 to 141 (RILVVEDEAV…ELVARCRALL (122 aa)) form the Response regulatory domain. 4-aspartylphosphate is present on D76. Residues 153 to 251 (NSVRQFKDIS…TVRGFGYRFG (99 aa)) constitute a DNA-binding region (ompR/PhoB-type).

Phosphorylation.

This chain is Probable transcriptional regulatory protein SYNPCC7002_A0851, found in Picosynechococcus sp. (strain ATCC 27264 / PCC 7002 / PR-6) (Agmenellum quadruplicatum).